A 269-amino-acid polypeptide reads, in one-letter code: MSRIADTFAELQSKGRKALIPYVTAGFPFVDITPALMHGMVEAGADVIELGVPFSDPMADGPVIQKAGEKALALGVGLAQVLEMVRSFRLRNSTTPVVLMGYANPVERYEQRHGKGAFARDAGEAGVDGVLIVDYPPEECEQFAADLRGHGIDLIFLLAPTSTAERMQQVARVASGYVYYVSLKGVTGSGALDTAAVEAMLPRIREHVKIPVGVGFGIRDAATAQAIGRVADAVVIGSRIIQLIEDQPHEKVVGITVDFLRGVRKALDA.

Active-site proton acceptor residues include glutamate 49 and aspartate 60.

It belongs to the TrpA family. Tetramer of two alpha and two beta chains.

It carries out the reaction (1S,2R)-1-C-(indol-3-yl)glycerol 3-phosphate + L-serine = D-glyceraldehyde 3-phosphate + L-tryptophan + H2O. The protein operates within amino-acid biosynthesis; L-tryptophan biosynthesis; L-tryptophan from chorismate: step 5/5. In terms of biological role, the alpha subunit is responsible for the aldol cleavage of indoleglycerol phosphate to indole and glyceraldehyde 3-phosphate. This Acidovorax ebreus (strain TPSY) (Diaphorobacter sp. (strain TPSY)) protein is Tryptophan synthase alpha chain.